The sequence spans 151 residues: Proline-rich acidic protein 1 (151 aa).

A signal peptide spans 1-20 (MRRLLLVTSLVVVLLWEAGA). Residues 71-151 (LTTEEKPRGQ…EDQDHIYHPQ (81 aa)) form a disordered region.

As to quaternary structure, interacts with isoform 1 and isoform 3 of MAD1L1. Interacts with MTTP. In terms of tissue distribution, highly expressed in the intestinal epithelial cells (at protein level). Abundantly expressed in the epithelial cells of the liver, kidney and cervix. Significantly down-regulated in hepatocellular carcinoma and right colon adenocarcinoma compared with the respective adjacent normal tissues. Expressed in epididymis (at protein level).

The protein resides in the secreted. The protein localises to the endoplasmic reticulum. Its function is as follows. Lipid-binding protein which promotes lipid absorption by facilitating MTTP-mediated lipid transfer (mainly triglycerides and phospholipids) and MTTP-mediated apoB lipoprotein assembly and secretion. Protects the gastrointestinal epithelium from irradiation-induced apoptosis. May play an important role in maintaining normal growth homeostasis in epithelial cells. Involved in p53/TP53-dependent cell survival after DNA damage. May down-regulate the expression of MAD1L1 and exert a suppressive role in mitotic spindle assembly checkpoint in hepatocellular carcinomas. The sequence is that of Proline-rich acidic protein 1 (PRAP1) from Homo sapiens (Human).